Reading from the N-terminus, the 461-residue chain is Fumarate hydratase class II (461 aa).

Residues 99 to 101 (SGT), 130 to 133 (HPND), 140 to 142 (STN), and T188 contribute to the substrate site. Catalysis depends on H189, which acts as the Proton donor/acceptor. The active site involves S319. Substrate contacts are provided by residues S320 and 325–327 (KVN).

Belongs to the class-II fumarase/aspartase family. Fumarase subfamily. In terms of assembly, homotetramer.

Its subcellular location is the cytoplasm. The catalysed reaction is (S)-malate = fumarate + H2O. It participates in carbohydrate metabolism; tricarboxylic acid cycle; (S)-malate from fumarate: step 1/1. Functionally, involved in the TCA cycle. Catalyzes the stereospecific interconversion of fumarate to L-malate. The chain is Fumarate hydratase class II from Prochlorococcus marinus subsp. pastoris (strain CCMP1986 / NIES-2087 / MED4).